The primary structure comprises 308 residues: rRNA 2'-O-methyltransferase fibrillarin 1 (308 aa).

Positions 1-68 (MRPPVTGGRG…PRGGMKGGSK (68 aa)) are disordered. Over residues 22 to 35 (GRGFGGGRSFGGGR) the composition is skewed to gly residues. Over residues 42–52 (SGPRGRGRGAP) the composition is skewed to basic residues. The span at 53–65 (RGRGGPPRGGMKG) shows a compositional bias: gly residues. S-adenosyl-L-methionine contacts are provided by residues 156-157 (TT), 175-176 (EF), 200-201 (DA), and 220-223 (DVAQ).

It belongs to the methyltransferase superfamily. Fibrillarin family. In terms of assembly, component of box C/D small nucleolar ribonucleoprotein (snoRNP) particles. Interacts with SKP1A. In terms of tissue distribution, expressed in roots, leaves and flowers. Expressed in stems.

It is found in the nucleus. The protein localises to the nucleolus. It carries out the reaction a ribonucleotide in rRNA + S-adenosyl-L-methionine = a 2'-O-methylribonucleotide in rRNA + S-adenosyl-L-homocysteine + H(+). The enzyme catalyses L-glutaminyl-[histone H2A] + S-adenosyl-L-methionine = N(5)-methyl-L-glutaminyl-[histone H2A] + S-adenosyl-L-homocysteine + H(+). In terms of biological role, S-adenosyl-L-methionine-dependent methyltransferase that has the ability to methylate both RNAs and proteins. Involved in pre-rRNA processing. Utilizes the methyl donor S-adenosyl-L-methionine to catalyze the site-specific 2'-hydroxyl methylation of ribose moieties in pre-ribosomal RNA. Site specificity is provided by a guide RNA that base pairs with the substrate. Methylation occurs at a characteristic distance from the sequence involved in base pairing with the guide RNA. Also acts as a protein methyltransferase by mediating methylation of 'Gln-105' of histone H2A (H2AQ105me), a modification that impairs binding of the FACT complex and is specifically present at 35S ribosomal DNA locus. Binds monophosphate phosphoinositides in vitro. The sequence is that of rRNA 2'-O-methyltransferase fibrillarin 1 from Arabidopsis thaliana (Mouse-ear cress).